Here is a 461-residue protein sequence, read N- to C-terminus: Chromosomal replication initiator protein DnaA (461 aa).

Residues 1-87 (MAVSLWQQCI…IGSRPSAKPV (87 aa)) form a domain I, interacts with DnaA modulators region. A domain II region spans residues 87-124 (VVQATAAVRTSRPVTREVTKPSFNTPHAEPMANANHRS). Positions 99–125 (PVTREVTKPSFNTPHAEPMANANHRSN) are disordered. The tract at residues 125–341 (NINPTYQFDN…GALNRVIANA (217 aa)) is domain III, AAA+ region. Residues G169, G171, K172, and T173 each contribute to the ATP site. Positions 342–461 (NFTGRPITID…YANLIRTLSS (120 aa)) are domain IV, binds dsDNA.

This sequence belongs to the DnaA family. In terms of assembly, oligomerizes as a right-handed, spiral filament on DNA at oriC.

The protein localises to the cytoplasm. Functionally, plays an essential role in the initiation and regulation of chromosomal replication. ATP-DnaA binds to the origin of replication (oriC) to initiate formation of the DNA replication initiation complex once per cell cycle. Binds the DnaA box (a 9 base pair repeat at the origin) and separates the double-stranded (ds)DNA. Forms a right-handed helical filament on oriC DNA; dsDNA binds to the exterior of the filament while single-stranded (ss)DNA is stabiized in the filament's interior. The ATP-DnaA-oriC complex binds and stabilizes one strand of the AT-rich DNA unwinding element (DUE), permitting loading of DNA polymerase. After initiation quickly degrades to an ADP-DnaA complex that is not apt for DNA replication. Binds acidic phospholipids. The chain is Chromosomal replication initiator protein DnaA from Shewanella pealeana (strain ATCC 700345 / ANG-SQ1).